Consider the following 509-residue polypeptide: Maturase K (509 aa).

This sequence belongs to the intron maturase 2 family. MatK subfamily.

It is found in the plastid. Its subcellular location is the chloroplast. In terms of biological role, usually encoded in the trnK tRNA gene intron. Probably assists in splicing its own and other chloroplast group II introns. In Nicotiana glauca (Glaucous tobacco), this protein is Maturase K.